The chain runs to 313 residues: HPr kinase/phosphorylase (313 aa).

Catalysis depends on residues His-140 and Lys-161. Gly-155–Ser-162 provides a ligand contact to ATP. Ser-162 contributes to the Mg(2+) binding site. Asp-179 (proton acceptor; for phosphorylation activity. Proton donor; for dephosphorylation activity) is an active-site residue. The interval Leu-203–Asp-212 is important for the catalytic mechanism of both phosphorylation and dephosphorylation. Mg(2+) is bound at residue Glu-204. Arg-245 is an active-site residue. The interval Pro-266 to Arg-271 is important for the catalytic mechanism of dephosphorylation.

It belongs to the HPrK/P family. Homohexamer. Requires Mg(2+) as cofactor.

It catalyses the reaction [HPr protein]-L-serine + ATP = [HPr protein]-O-phospho-L-serine + ADP + H(+). The enzyme catalyses [HPr protein]-O-phospho-L-serine + phosphate + H(+) = [HPr protein]-L-serine + diphosphate. Functionally, catalyzes the ATP- as well as the pyrophosphate-dependent phosphorylation of a specific serine residue in HPr, a phosphocarrier protein of the phosphoenolpyruvate-dependent sugar phosphotransferase system (PTS). HprK/P also catalyzes the pyrophosphate-producing, inorganic phosphate-dependent dephosphorylation (phosphorolysis) of seryl-phosphorylated HPr (P-Ser-HPr). The two antagonistic activities of HprK/P are regulated by several intracellular metabolites, which change their concentration in response to the absence or presence of rapidly metabolisable carbon sources (glucose, fructose, etc.) in the growth medium. Therefore, by controlling the phosphorylation state of HPr, HPrK/P is a sensor enzyme that plays a major role in the regulation of carbon metabolism and sugar transport: it mediates carbon catabolite repression (CCR), and regulates PTS-catalyzed carbohydrate uptake and inducer exclusion. This Latilactobacillus sakei subsp. sakei (strain 23K) (Lactobacillus sakei subsp. sakei) protein is HPr kinase/phosphorylase.